The primary structure comprises 112 residues: uncharacterized protein (112 aa).

Disordered stretches follow at residues 1-53 (MSKL…QRLK) and 80-112 (MINQ…MLEL). The span at 8 to 22 (SALQKLIESQKNPNA) shows a compositional bias: polar residues. Basic residues predominate over residues 86–96 (ETKKRKRKQKK). Residues 101–112 (DYGVFEEDMLEL) are compositionally biased toward acidic residues.

It localises to the nucleus. Its subcellular location is the nucleolus. This is an uncharacterized protein from Schizosaccharomyces pombe (strain 972 / ATCC 24843) (Fission yeast).